Reading from the N-terminus, the 455-residue chain is Chromosomal replication initiator protein DnaA (455 aa).

Residues 1–77 are domain I, interacts with DnaA modulators; sequence MASLNENQKF…GFEVFGRMID (77 aa). The interval 77–116 is domain II; that stretch reads DYELYANDELTELELHRLNNQSSIEEQPRSTAKPASPLVS. Positions 117-333 are domain III, AAA+ region; sequence GLNEKYNFEN…GALNRVEFVA (217 aa). G161, G163, K164, and T165 together coordinate ATP. Residues 334–455 form a domain IV, binds dsDNA region; that stretch reads RANGIAVVDI…KDIDSIKRKF (122 aa).

Belongs to the DnaA family. Oligomerizes as a right-handed, spiral filament on DNA at oriC.

It is found in the cytoplasm. In terms of biological role, plays an essential role in the initiation and regulation of chromosomal replication. ATP-DnaA binds to the origin of replication (oriC) to initiate formation of the DNA replication initiation complex once per cell cycle. Binds the DnaA box (a 9 base pair repeat at the origin) and separates the double-stranded (ds)DNA. Forms a right-handed helical filament on oriC DNA; dsDNA binds to the exterior of the filament while single-stranded (ss)DNA is stabiized in the filament's interior. The ATP-DnaA-oriC complex binds and stabilizes one strand of the AT-rich DNA unwinding element (DUE), permitting loading of DNA polymerase. After initiation quickly degrades to an ADP-DnaA complex that is not apt for DNA replication. Binds acidic phospholipids. This Lactococcus lactis subsp. lactis (strain IL1403) (Streptococcus lactis) protein is Chromosomal replication initiator protein DnaA.